The primary structure comprises 658 residues: Alkyldihydroxyacetonephosphate synthase, peroxisomal (658 aa).

2 disordered regions span residues 1–41 (MAEA…LRVL) and 63–86 (AASA…IPKK). The transit peptide at 1 to 58 (MAEAAAAAGGTGLGAGASYGSAADRDRDPDPDRAGRRLRVLSGHLLGRPREALSTNEC) directs the protein to the peroxisome. The segment covering 23-35 (ADRDRDPDPDRAG) has biased composition (basic and acidic residues). Over residues 63–77 (AASAATAAPTATPAA) the composition is skewed to low complexity. S65 bears the Phosphoserine mark. T74 is subject to Phosphothreonine. Residue K102 is modified to N6-acetyllysine. The 183-residue stretch at 202 to 384 (FERIPDIVLW…TEATIKIRPV (183 aa)) folds into the FAD-binding PCMH-type domain. FAD is bound by residues 234-240 (PIGGGTS), 303-309 (DSLEFST), and 316-319 (TRAS). K347 is modified (N6-acetyllysine). FAD is bound at residue 368 to 374 (EGTLGVI). R515 is a binding site for substrate. Residue Y578 is the Proton donor/acceptor of the active site. Important for enzyme activity stretches follow at residues 615–617 (HHH) and 654–658 (NRNLL).

This sequence belongs to the FAD-binding oxidoreductase/transferase type 4 family. Homodimer. It depends on FAD as a cofactor.

It localises to the peroxisome membrane. The protein resides in the peroxisome. It carries out the reaction a long chain fatty alcohol + a 1-acylglycerone 3-phosphate = a 1-O-alkylglycerone 3-phosphate + a long-chain fatty acid + H(+). The catalysed reaction is hexadecan-1-ol + 1-hexadecanoylglycerone 3-phosphate = 1-O-hexadecylglycerone 3-phosphate + hexadecanoate + H(+). The enzyme catalyses 1-hexadecanoylglycerone 3-phosphate + a long-chain fatty acid = a 1-acylglycerone 3-phosphate + hexadecanoate. It participates in glycerolipid metabolism; ether lipid biosynthesis. Functionally, catalyzes the exchange of the acyl chain in acyl-dihydroxyacetonephosphate (acyl-DHAP) for a long chain fatty alcohol, yielding the first ether linked intermediate, i.e. alkyl-dihydroxyacetonephosphate (alkyl-DHAP), in the pathway of ether lipid biosynthesis. The sequence is that of Alkyldihydroxyacetonephosphate synthase, peroxisomal (AGPS) from Homo sapiens (Human).